Reading from the N-terminus, the 98-residue chain is DNA-binding protein Fis (98 aa).

The segment at residues 74-93 (QTRAATMLGINRGTLRKKLK) is a DNA-binding region (H-T-H motif).

This sequence belongs to the transcriptional regulatory Fis family. As to quaternary structure, homodimer.

Its function is as follows. Activates ribosomal RNA transcription. Plays a direct role in upstream activation of rRNA promoters. In Histophilus somni (strain 2336) (Haemophilus somnus), this protein is DNA-binding protein Fis.